The following is a 231-amino-acid chain: Thermonuclease (231 aa).

The signal sequence occupies residues Met1–Ala26. 2 propeptides span residues Ile27–Ala63 and Ser64–Ser82. A compositionally biased stretch (polar residues) spans Ala61–Ser73. Positions Ala61–Thr86 are disordered. Asp103 is a binding site for Ca(2+). The active site involves Arg117. Asp122 and Thr123 together coordinate Ca(2+). Active-site residues include Glu125 and Arg169. The span at His203–Leu219 shows a compositional bias: basic and acidic residues. Positions His203–Gln231 are disordered.

It belongs to the thermonuclease family. The cofactor is Ca(2+).

Its subcellular location is the secreted. It is found in the membrane. The enzyme catalyses Endonucleolytic cleavage to nucleoside 3'-phosphates and 3'-phosphooligonucleotide end-products.. Its function is as follows. Enzyme that catalyzes the hydrolysis of both DNA and RNA at the 5' position of the phosphodiester bond. The protein is Thermonuclease of Staphylococcus aureus.